The primary structure comprises 255 residues: Triosephosphate isomerase (255 aa).

Position 9–11 (9–11 (NWK)) interacts with substrate. H100 serves as the catalytic Electrophile. Residue E169 is the Proton acceptor of the active site. Substrate-binding positions include G175, S208, and 229-230 (GG).

The protein belongs to the triosephosphate isomerase family. Homodimer.

The protein resides in the cytoplasm. It catalyses the reaction D-glyceraldehyde 3-phosphate = dihydroxyacetone phosphate. It participates in carbohydrate biosynthesis; gluconeogenesis. Its pathway is carbohydrate degradation; glycolysis; D-glyceraldehyde 3-phosphate from glycerone phosphate: step 1/1. Involved in the gluconeogenesis. Catalyzes stereospecifically the conversion of dihydroxyacetone phosphate (DHAP) to D-glyceraldehyde-3-phosphate (G3P). This Synechococcus sp. (strain JA-3-3Ab) (Cyanobacteria bacterium Yellowstone A-Prime) protein is Triosephosphate isomerase.